The sequence spans 359 residues: WAT1-related protein At4g16620 (359 aa).

Transmembrane regions (helical) follow at residues 5-25 (ETLI…IYAG), 41-61 (LLIV…LAFL), 77-97 (IKLV…FLEG), 105-125 (MATA…WAAG), 143-163 (TVLC…TATL), 183-203 (ILGC…IVLQ), 206-226 (ILAE…MGGI), 246-266 (VIGL…SGGG), 279-299 (PVIV…VSAF), and 305-325 (FNLG…FVLW). The region spanning 30 to 154 (LSQLLSLGID…LCVMGALIMS (125 aa)) is the EamA 1 domain. In terms of domain architecture, EamA 2 spans 206–324 (ILAEFPAPIS…LMFGGLYFVL (119 aa)).

This sequence belongs to the drug/metabolite transporter (DMT) superfamily. Plant drug/metabolite exporter (P-DME) (TC 2.A.7.4) family.

Its subcellular location is the membrane. The protein is WAT1-related protein At4g16620 of Arabidopsis thaliana (Mouse-ear cress).